We begin with the raw amino-acid sequence, 428 residues long: Histone deacetylase 3 (428 aa).

The interval 3–316 (KTVAYFYDPD…WTYETSLLVD (314 aa)) is histone deacetylase. 1D-myo-inositol 1,4,5,6-tetrakisphosphate-binding residues include histidine 17, glycine 21, and lysine 25. The active site involves histidine 135. 3 residues coordinate Zn(2+): aspartate 170, histidine 172, and aspartate 259. Arginine 265 contributes to the 1D-myo-inositol 1,4,5,6-tetrakisphosphate binding site. A disordered region spans residues 385-428 (LSYDRTDEPDPEERGSEENYSRPEAANEFYDGDHDNDKESDVEI). 2 stretches are compositionally biased toward basic and acidic residues: residues 386-405 (SYDR…ENYS) and 415-428 (DGDH…DVEI).

It belongs to the histone deacetylase family. HD type 1 subfamily.

The protein localises to the nucleus. Its subcellular location is the chromosome. The protein resides in the cytoplasm. It is found in the cytosol. It carries out the reaction N(6)-acetyl-L-lysyl-[histone] + H2O = L-lysyl-[histone] + acetate. The enzyme catalyses N(6)-acetyl-L-lysyl-[protein] + H2O = L-lysyl-[protein] + acetate. It catalyses the reaction N(6)-(2E)-butenoyl-L-lysyl-[protein] + H2O = (2E)-2-butenoate + L-lysyl-[protein]. The catalysed reaction is N(6)-(2-hydroxyisobutanoyl)-L-lysyl-[protein] + H2O = 2-hydroxy-2-methylpropanoate + L-lysyl-[protein]. It carries out the reaction N(6)-[(S)-lactoyl]-L-lysyl-[protein] + H2O = (S)-lactate + L-lysyl-[protein]. Inositol tetraphosphate (1D-myo-inositol 1,4,5,6-tetrakisphosphate) promotes the histone deacetylase activity by acting as an intermolecular glue between HDAC3 and N-Cor repressor complex components. Functionally, histone deacetylase that catalyzes the deacetylation of lysine residues on the N-terminal part of the core histones (H2A, H2B, H3 and H4), and some other non-histone substrates. Histone deacetylation gives a tag for epigenetic repression and plays an important role in transcriptional regulation, cell cycle progression and developmental events. Histone deacetylases act via the formation of large multiprotein complexes, such as N-Cor repressor complex, which activate the histone deacetylase activity. Participates in the BCL6 transcriptional repressor activity by deacetylating the H3 'Lys-27' (H3K27) on enhancer elements, antagonizing EP300 acetyltransferase activity and repressing proximal gene expression. Also functions as a deacetylase for non-histone targets. In addition to protein deacetylase activity, also acts as a protein-lysine deacylase by recognizing other acyl groups: catalyzes removal of (2E)-butenoyl (crotonyl), lactoyl (lactyl) and 2-hydroxyisobutanoyl (2-hydroxyisobutyryl) acyl groups from lysine residues, leading to protein decrotonylation, delactylation and de-2-hydroxyisobutyrylation, respectively. This Gallus gallus (Chicken) protein is Histone deacetylase 3 (HDAC3).